The primary structure comprises 183 residues: Phosphinothricin N-acetyltransferase (183 aa).

The N-acetyltransferase domain maps to V8–E169. Acetyl-CoA-binding positions include V91–V93, R99–S104, and N130.

This sequence belongs to the acetyltransferase family. PAT/BAR subfamily.

It catalyses the reaction phosphinothricin + acetyl-CoA = N-acetylphosphinothricin + CoA + H(+). In terms of biological role, inactivates phosphinothricin (PPT) by transfer of an acetyl group from acetyl CoA. This enzyme is an effector of phosphinothricin tripeptide (PTT or bialaphos) resistance. This chain is Phosphinothricin N-acetyltransferase, found in Streptomyces viridochromogenes (strain DSM 40736 / JCM 4977 / BCRC 1201 / Tue 494).